A 505-amino-acid chain; its full sequence is Sucrose porin (505 aa).

An N-terminal signal peptide occupies residues Met-1–Gly-22. Residues Glu-44 to Gly-94 form a disordered region. Over residues Arg-46–Thr-82 the composition is skewed to low complexity. Over residues Thr-83 to Gly-93 the composition is skewed to basic and acidic residues.

This sequence belongs to the porin LamB (TC 1.B.3) family. Homotrimer.

It localises to the cell outer membrane. Functionally, porin for sucrose uptake. This is Sucrose porin (scrY) from Klebsiella pneumoniae.